Reading from the N-terminus, the 332-residue chain is MNLLNLPKIELHCHLDGSLRVETAIELAKKEGIKLHSYEYDKVKELLVISKECNSLEDYLNRFALPAKLLQRPENLERVAFELMEDASKENVKYIEIRFAPLLHLEKGMTQKEVIESVIKGIRKAEEFYDIKGNLILSCLRHHSIDSVYEVIEEGKNFIGKGVVAIDLAGGELEGFVKPYKEVMKLARESGFRVTIHAGETGYGKNVRDAIELLGAERIGHGLFIFNDEEAYNLVKEKGVTLEMCPKSNIDTKGVNKYEEHPIYKYHKDNIRVNLSTDNRTVSNINLTEEFENVHKTFNIDFEDYKKIYLNSVEASFCSEELKEKLKLSIII.

Residues His12 and His14 each coordinate Zn(2+). His14, Asp16, and Gly170 together coordinate substrate. Residue His197 coordinates Zn(2+). Catalysis depends on Glu200, which acts as the Proton donor. Asp278 lines the Zn(2+) pocket.

Belongs to the metallo-dependent hydrolases superfamily. Adenosine and AMP deaminases family. Adenosine deaminase subfamily. It depends on Zn(2+) as a cofactor.

The catalysed reaction is adenosine + H2O + H(+) = inosine + NH4(+). It catalyses the reaction 2'-deoxyadenosine + H2O + H(+) = 2'-deoxyinosine + NH4(+). In terms of biological role, catalyzes the hydrolytic deamination of adenosine and 2-deoxyadenosine. The polypeptide is Adenosine deaminase (Clostridium perfringens (strain SM101 / Type A)).